The sequence spans 463 residues: ATP-dependent protease ATPase subunit HslU (463 aa).

Residues I19, 61-66, D277, E341, and R413 contribute to the ATP site; that span reads GVGKTE.

The protein belongs to the ClpX chaperone family. HslU subfamily. As to quaternary structure, a double ring-shaped homohexamer of HslV is capped on each side by a ring-shaped HslU homohexamer. The assembly of the HslU/HslV complex is dependent on binding of ATP.

It localises to the cytoplasm. ATPase subunit of a proteasome-like degradation complex; this subunit has chaperone activity. The binding of ATP and its subsequent hydrolysis by HslU are essential for unfolding of protein substrates subsequently hydrolyzed by HslV. HslU recognizes the N-terminal part of its protein substrates and unfolds these before they are guided to HslV for hydrolysis. The chain is ATP-dependent protease ATPase subunit HslU from Bacillus cereus (strain AH187).